Here is a 297-residue protein sequence, read N- to C-terminus: Protein CANDIDATE G-PROTEIN COUPLED RECEPTOR 8 (297 aa).

N-linked (GlcNAc...) asparagine glycosylation is present at Asn20. A run of 7 helical transmembrane segments spans residues 34 to 54 (GFLH…YLAY), 70 to 90 (IMIA…AWCC), 107 to 127 (LTLF…AFLF), 142 to 162 (FLIS…FLFG), 180 to 200 (WGLW…VFLM), 215 to 235 (FYNY…ASAF), and 242 to 262 (FGFW…LPLL).

The protein belongs to the UPF0359 family.

It is found in the membrane. Its function is as follows. G-protein coupled receptor. Plays a role in plants and microbes interactions. This is Protein CANDIDATE G-PROTEIN COUPLED RECEPTOR 8 from Arabidopsis thaliana (Mouse-ear cress).